Consider the following 89-residue polypeptide: Small ribosomal subunit protein uS15 (89 aa).

The protein belongs to the universal ribosomal protein uS15 family. Part of the 30S ribosomal subunit. Forms a bridge to the 50S subunit in the 70S ribosome, contacting the 23S rRNA.

In terms of biological role, one of the primary rRNA binding proteins, it binds directly to 16S rRNA where it helps nucleate assembly of the platform of the 30S subunit by binding and bridging several RNA helices of the 16S rRNA. Forms an intersubunit bridge (bridge B4) with the 23S rRNA of the 50S subunit in the ribosome. This Beijerinckia indica subsp. indica (strain ATCC 9039 / DSM 1715 / NCIMB 8712) protein is Small ribosomal subunit protein uS15.